A 118-amino-acid chain; its full sequence is Mitochondrial protein YPR099C (118 aa).

It localises to the mitochondrion. Essential for the functional mitochondria and respiratory growth. This chain is Mitochondrial protein YPR099C, found in Saccharomyces cerevisiae (strain ATCC 204508 / S288c) (Baker's yeast).